We begin with the raw amino-acid sequence, 358 residues long: Protein ttm-2 (358 aa).

The protein belongs to the arrestin family.

Functionally, involved in resistance to B.thuringiensis pore-forming toxin Cry5B downstream of the sek-1 and pmk-1 MAPK kinase pathway. This is Protein ttm-2 from Caenorhabditis elegans.